A 164-amino-acid polypeptide reads, in one-letter code: General odorant-binding protein 1 (164 aa).

Residues 1–19 (MPGVLRALLLLAAAAPLLA) form the signal peptide. 3 disulfide bridges follow: C38-C73, C69-C127, and C116-C136.

It belongs to the PBP/GOBP family. In terms of tissue distribution, antenna.

In terms of biological role, present in the aqueous fluid surrounding olfactory sensory dendrites and are thought to aid in the capture and transport of hydrophobic odorants into and through this fluid. The chain is General odorant-binding protein 1 from Heliothis virescens (Tobacco budworm moth).